Reading from the N-terminus, the 321-residue chain is ATP-dependent 6-phosphofructokinase (321 aa).

Position 12 (G12) interacts with ATP. Residues R22 to R26 and R55 to D60 each bind ADP. ATP-binding positions include R73 to F74 and G103 to S106. A Mg(2+)-binding site is contributed by D104. Substrate is bound at residue T127–D129. Residue D129 is the Proton acceptor of the active site. R156 lines the ADP pocket. Substrate contacts are provided by residues R164 and M171–R173. ADP contacts are provided by residues G187–E189 and K215–H217. Substrate-binding positions include E224, R245, and H251–R254.

This sequence belongs to the phosphofructokinase type A (PFKA) family. ATP-dependent PFK group I subfamily. Prokaryotic clade 'B1' sub-subfamily. As to quaternary structure, homotetramer. Mg(2+) serves as cofactor.

It is found in the cytoplasm. It carries out the reaction beta-D-fructose 6-phosphate + ATP = beta-D-fructose 1,6-bisphosphate + ADP + H(+). It functions in the pathway carbohydrate degradation; glycolysis; D-glyceraldehyde 3-phosphate and glycerone phosphate from D-glucose: step 3/4. With respect to regulation, allosterically activated by ADP and other diphosphonucleosides, and allosterically inhibited by phosphoenolpyruvate. Catalyzes the phosphorylation of D-fructose 6-phosphate to fructose 1,6-bisphosphate by ATP, the first committing step of glycolysis. The sequence is that of ATP-dependent 6-phosphofructokinase from Mannheimia succiniciproducens (strain KCTC 0769BP / MBEL55E).